We begin with the raw amino-acid sequence, 105 residues long: Gastrin/cholecystokinin-like peptide (105 aa).

A signal peptide spans 1 to 20; that stretch reads MKTKVFLGLILSAAVTACLC. The propeptide occupies 21-38; sequence RPAAKAPGGSHRPTSSLA. Positions 24–51 are disordered; that stretch reads AKAPGGSHRPTSSLARRDWPEPPSQEQQ. The residue at position 87 (Y87) is a Sulfotyrosine. F93 carries the post-translational modification Phenylalanine amide. Positions 97–105 are excised as a propeptide; it reads STEDAADAA.

It belongs to the gastrin/cholecystokinin family.

The protein localises to the secreted. Functionally, potent stimulus of gastric acid, but not of pancreatic secretion. The polypeptide is Gastrin/cholecystokinin-like peptide (Gallus gallus (Chicken)).